A 311-amino-acid polypeptide reads, in one-letter code: Urease accessory protein UreD 2 (311 aa).

Belongs to the UreD family. UreD, UreF and UreG form a complex that acts as a GTP-hydrolysis-dependent molecular chaperone, activating the urease apoprotein by helping to assemble the nickel containing metallocenter of UreC. The UreE protein probably delivers the nickel.

Its subcellular location is the cytoplasm. Functionally, required for maturation of urease via the functional incorporation of the urease nickel metallocenter. This is Urease accessory protein UreD 2 from Methylorubrum extorquens (strain PA1) (Methylobacterium extorquens).